We begin with the raw amino-acid sequence, 199 residues long: Isopentenyl-diphosphate Delta-isomerase (199 aa).

Residues histidine 40 and histidine 47 each contribute to the Mn(2+) site. A Nudix hydrolase domain is found at 45 to 186 (PRHLAFSCHV…PALLSPWAVE (142 aa)). Cysteine 82 is an active-site residue. Residue cysteine 82 participates in Mg(2+) binding. A Mn(2+)-binding site is contributed by histidine 84. Glutamate 102 is a Mg(2+) binding site. Residues glutamate 131 and glutamate 133 each contribute to the Mn(2+) site. The active site involves glutamate 133.

It belongs to the IPP isomerase type 1 family. Requires Mg(2+) as cofactor. The cofactor is Mn(2+).

The protein resides in the cytoplasm. It carries out the reaction isopentenyl diphosphate = dimethylallyl diphosphate. It participates in isoprenoid biosynthesis; dimethylallyl diphosphate biosynthesis; dimethylallyl diphosphate from isopentenyl diphosphate: step 1/1. In terms of biological role, catalyzes the 1,3-allylic rearrangement of the homoallylic substrate isopentenyl (IPP) to its highly electrophilic allylic isomer, dimethylallyl diphosphate (DMAPP). In Cutibacterium acnes (strain DSM 16379 / KPA171202) (Propionibacterium acnes), this protein is Isopentenyl-diphosphate Delta-isomerase.